Reading from the N-terminus, the 327-residue chain is Malate dehydrogenase (327 aa).

11–17 serves as a coordination point for NAD(+); that stretch reads GAAGQIA. Residues Arg92 and Arg98 each coordinate substrate. NAD(+)-binding positions include Asn105, Gln112, and 129–131; that span reads VGN. Residues Asn131 and Arg162 each contribute to the substrate site. His187 serves as the catalytic Proton acceptor.

It belongs to the LDH/MDH superfamily. MDH type 2 family.

The enzyme catalyses (S)-malate + NAD(+) = oxaloacetate + NADH + H(+). Functionally, catalyzes the reversible oxidation of malate to oxaloacetate. The sequence is that of Malate dehydrogenase from Nitrosospira multiformis (strain ATCC 25196 / NCIMB 11849 / C 71).